Here is a 368-residue protein sequence, read N- to C-terminus: N-acetylneuraminate epimerase (368 aa).

The N-terminal stretch at 1-19 (MNKTITALAIMMASFAANA) is a signal peptide. Kelch repeat units follow at residues 40–84 (TVYI…AFID), 86–137 (NLYV…FVHN), 139–173 (KAYV…KINA), 174–219 (YYFD…VNKG), 222–265 (TWLI…VAGG), 287–336 (ENYQ…PWNN), and 338–367 (LLII…VTVQ). Residue glutamate 228 is the Proton acceptor of the active site.

This sequence belongs to the NanM family. In terms of assembly, homodimer.

Its subcellular location is the periplasm. The catalysed reaction is N-acetyl-alpha-neuraminate = N-acetyl-beta-neuraminate. Functionally, converts alpha-N-acetylneuranimic acid (Neu5Ac) to the beta-anomer, accelerating the equilibrium between the alpha- and beta-anomers. Probably facilitates sialidase-negative bacteria to compete successfully for limited amounts of extracellular Neu5Ac, which is likely taken up in the beta-anomer. In addition, the rapid removal of sialic acid from solution might be advantageous to the bacterium to damp down host responses. This is N-acetylneuraminate epimerase from Shigella boydii serotype 4 (strain Sb227).